We begin with the raw amino-acid sequence, 548 residues long: Zinc metalloproteinase dpy-31 (548 aa).

The first 24 residues, methionine 1–glycine 24, serve as a signal peptide directing secretion. A propeptide spanning residues tyrosine 25 to lysine 150 is cleaved from the precursor. Residues lysine 150–serine 349 form the Peptidase M12A domain. Asparagine 190 carries N-linked (GlcNAc...) asparagine glycosylation. 5 cysteine pairs are disulfide-bonded: cysteine 193-cysteine 348, cysteine 216-cysteine 237, cysteine 352-cysteine 372, cysteine 374-cysteine 383, and cysteine 394-cysteine 422. Histidine 245 serves as a coordination point for Zn(2+). Glutamate 246 is an active-site residue. 2 residues coordinate Zn(2+): histidine 249 and histidine 255. Positions asparagine 344–glutamate 384 constitute an EGF-like domain. The CUB domain occupies cysteine 394–leucine 510. Asparagine 461 is a glycosylation site (N-linked (GlcNAc...) asparagine). In terms of domain architecture, TSP type-1 spans asparagine 513–proline 547. Disulfide bonds link cysteine 525–cysteine 546, cysteine 529–cysteine 546, and cysteine 541–cysteine 546.

Zn(2+) is required as a cofactor.

It localises to the secreted. In terms of biological role, metalloprotease which cleaves the carboxyl terminus of procollagens to mature collagens. Probably involved in cuticular collagen maturation. This Haemonchus contortus (Barber pole worm) protein is Zinc metalloproteinase dpy-31.